The chain runs to 196 residues: Adenylate kinase (196 aa).

10–15 (GAGKGT) is an ATP binding site. Residues 30-59 (STGDMLRAAVSAGTEIGKRAKAVMDAGGLV) are NMP. Residues threonine 31, arginine 36, 57–59 (GLV), 85–88 (GYPR), and glutamine 92 contribute to the AMP site. Residues 126 to 142 (NRVAETIAAGGTVRSDD) are LID. Arginine 127 is a binding site for ATP. AMP is bound by residues arginine 139 and arginine 150. Alanine 178 provides a ligand contact to ATP.

The protein belongs to the adenylate kinase family. Monomer.

The protein localises to the cytoplasm. It carries out the reaction AMP + ATP = 2 ADP. Its pathway is purine metabolism; AMP biosynthesis via salvage pathway; AMP from ADP: step 1/1. In terms of biological role, catalyzes the reversible transfer of the terminal phosphate group between ATP and AMP. Plays an important role in cellular energy homeostasis and in adenine nucleotide metabolism. The chain is Adenylate kinase from Agrobacterium fabrum (strain C58 / ATCC 33970) (Agrobacterium tumefaciens (strain C58)).